We begin with the raw amino-acid sequence, 369 residues long: Glutamate 5-kinase (369 aa).

Lys9 contributes to the ATP binding site. Substrate is bound by residues Ser49, Asp136, and Asn148. Residues 168–169 and 210–216 contribute to the ATP site; these read TD and TGGMLTK. In terms of domain architecture, PUA spans 275–355; that stretch reads QGSIWVDKGA…KGVLIYRDDW (81 aa).

Belongs to the glutamate 5-kinase family.

It is found in the cytoplasm. It catalyses the reaction L-glutamate + ATP = L-glutamyl 5-phosphate + ADP. It functions in the pathway amino-acid biosynthesis; L-proline biosynthesis; L-glutamate 5-semialdehyde from L-glutamate: step 1/2. Catalyzes the transfer of a phosphate group to glutamate to form L-glutamate 5-phosphate. This chain is Glutamate 5-kinase, found in Streptococcus pneumoniae serotype 4 (strain ATCC BAA-334 / TIGR4).